A 415-amino-acid chain; its full sequence is 3-oxoacyl-[acyl-carrier-protein] synthase 2 (415 aa).

The Ketosynthase family 3 (KS3) domain occupies 3 to 412 (KRRVVVTGMG…GTNGSLVFKK (410 aa)). Active-site for beta-ketoacyl synthase activity residues include Cys-164, His-304, and His-342.

The protein belongs to the thiolase-like superfamily. Beta-ketoacyl-ACP synthases family. In terms of assembly, homodimer.

The enzyme catalyses a fatty acyl-[ACP] + malonyl-[ACP] + H(+) = a 3-oxoacyl-[ACP] + holo-[ACP] + CO2. It catalyses the reaction (9Z)-hexadecenoyl-[ACP] + malonyl-[ACP] + H(+) = 3-oxo-(11Z)-octadecenoyl-[ACP] + holo-[ACP] + CO2. The protein operates within lipid metabolism; fatty acid biosynthesis. In terms of biological role, involved in the type II fatty acid elongation cycle. Catalyzes the elongation of a wide range of acyl-ACP by the addition of two carbons from malonyl-ACP to an acyl acceptor. Can efficiently catalyze the conversion of palmitoleoyl-ACP (cis-hexadec-9-enoyl-ACP) to cis-vaccenoyl-ACP (cis-octadec-11-enoyl-ACP), an essential step in the thermal regulation of fatty acid composition. The protein is 3-oxoacyl-[acyl-carrier-protein] synthase 2 (fabF) of Vibrio harveyi (Beneckea harveyi).